We begin with the raw amino-acid sequence, 233 residues long: UPF0502 protein YpsIP31758_2048 (233 aa).

The protein belongs to the UPF0502 family.

This is UPF0502 protein YpsIP31758_2048 from Yersinia pseudotuberculosis serotype O:1b (strain IP 31758).